The primary structure comprises 205 residues: Octanoyltransferase (205 aa).

In terms of domain architecture, BPL/LPL catalytic spans asparagine 30–phenylalanine 205. Substrate-binding positions include arginine 68–histidine 75, alanine 140–glycine 142, and glycine 153–alanine 155. The active-site Acyl-thioester intermediate is the cysteine 171.

The protein belongs to the LipB family.

It localises to the cytoplasm. The enzyme catalyses octanoyl-[ACP] + L-lysyl-[protein] = N(6)-octanoyl-L-lysyl-[protein] + holo-[ACP] + H(+). It participates in protein modification; protein lipoylation via endogenous pathway; protein N(6)-(lipoyl)lysine from octanoyl-[acyl-carrier-protein]: step 1/2. Functionally, catalyzes the transfer of endogenously produced octanoic acid from octanoyl-acyl-carrier-protein onto the lipoyl domains of lipoate-dependent enzymes. Lipoyl-ACP can also act as a substrate although octanoyl-ACP is likely to be the physiological substrate. The protein is Octanoyltransferase of Wolbachia pipientis subsp. Culex pipiens (strain wPip).